A 95-amino-acid chain; its full sequence is Small ribosomal subunit protein bS20 (95 aa).

Positions 1-22 (MANIKSQIKRNRTNENNRLRNK) are disordered. Basic and acidic residues predominate over residues 12-22 (RTNENNRLRNK).

Belongs to the bacterial ribosomal protein bS20 family.

Its function is as follows. Binds directly to 16S ribosomal RNA. This Tropheryma whipplei (strain TW08/27) (Whipple's bacillus) protein is Small ribosomal subunit protein bS20.